A 1142-amino-acid chain; its full sequence is Protein lin-25 (1142 aa).

Residues Ile600 to Pro613 show a composition bias toward acidic residues. A disordered region spans residues Ile600–Thr706. 3 stretches are compositionally biased toward basic and acidic residues: residues Glu614 to Glu627, Asp652 to Thr662, and Asp679 to Leu703.

The protein resides in the nucleus. The protein localises to the cytoplasm. Its function is as follows. Participates in the inductive signaling pathway downstream of let-60 Ras and the RAF/MAP kinase cascade to regulate specification and differentiation of many cell types. Positively regulates the fate of vulval precursor cells. Required for induction of the P12 and excretory duct cell fates. In males, it is also required for proper formation of spicules. Does not function in the signaling pathway that promotes exit from pachytene. The chain is Protein lin-25 from Caenorhabditis briggsae.